Reading from the N-terminus, the 101-residue chain is Protein RnfH (101 aa).

Belongs to the UPF0125 (RnfH) family.

The polypeptide is Protein RnfH (Pseudomonas aeruginosa (strain LESB58)).